Reading from the N-terminus, the 1038-residue chain is Importin-7 (1038 aa).

M1 is modified (N-acetylmethionine). The 80-residue stretch at 22-101 (AERQLNEAHK…RENIVEAIIH (80 aa)) folds into the Importin N-terminal domain. The segment at 881–910 (EHENDSDDDDEAEDDDETEELGSDEDDIDE) is disordered. A compositionally biased stretch (acidic residues) spans 884-910 (NDSDDDDEAEDDDETEELGSDEDDIDE). S886 is subject to Phosphoserine. Phosphothreonine is present on T898. Phosphoserine occurs at positions 903 and 1020.

The protein belongs to the importin beta family. Forms a heterodimer with KPNB1. Interacts with histone H1. Interacts with H2A, H2B, H3 and H4 histones. Interacts with SNUPN and XPO1. Interacts with RPS7 and RPL5. Interacts with RPL23A (via BIB domain). Binds directly to nuclear pore complexes. Interacts with SMAD4 and NUP93; translocates SMAD4 to the nucleus through the NPC upon BMP7 stimulation resulting in activation of SMAD4 signaling. Interacts with phosphorylated SMAD2; the interaction facilitates translocation of SMAD2 to the nucleus. Interacts with SRP19. Interacts with RUNX2; the interaction inhibits RUNX2 nuclear translocation in osteoblasts. Interacts with HDAC6, DLX3 and KLF4; the interaction facilitates HDAC6, DLX3 and KLF4 nuclear translocation in dental papilla cells. In terms of assembly, (Microbial infection) Interacts with HIV-1 reverse transcription complex integrase and rev.

It is found in the cytoplasm. Its subcellular location is the nucleus. Functionally, functions in nuclear protein import, either by acting as autonomous nuclear transport receptor or as an adapter-like protein in association with the importin-beta subunit KPNB1. Acting autonomously, is thought to serve itself as receptor for nuclear localization signals (NLS) and to promote translocation of import substrates through the nuclear pore complex (NPC) by an energy requiring, Ran-dependent mechanism. At the nucleoplasmic side of the NPC, Ran binds to importin, the importin/substrate complex dissociates and importin is re-exported from the nucleus to the cytoplasm where GTP hydrolysis releases Ran. The directionality of nuclear import is thought to be conferred by an asymmetric distribution of the GTP- and GDP-bound forms of Ran between the cytoplasm and nucleus. Mediates autonomously the nuclear import of ribosomal proteins RPL23A, RPS7 and RPL5. In association with KPNB1 mediates the nuclear import of H1 histone and the Ran-binding site of IPO7 is not required but synergizes with that of KPNB1 in importin/substrate complex dissociation. Promotes odontoblast differentiation via promoting nuclear translocation of DLX3, KLF4, SMAD2, thereby facilitating the transcription of target genes that play a role in odontoblast differentiation. Facilitates BMP4-induced translocation of SMAD1 to the nucleus and recruitment to the MSX1 gene promoter, thereby promotes the expression of the odontogenic regulator MSX1 in dental mesenchymal cells. Also promotes odontoblast differentiation by facilitating the nuclear translocation of HDAC6 and subsequent repression of RUNX2 expression. Inhibits osteoblast differentiation by inhibiting nuclear translocation of RUNX2 and therefore inhibition of RUNX2 target gene transcription. In vitro, mediates nuclear import of H2A, H2B, H3 and H4 histones. In terms of biological role, (Microbial infection) Mediates the nuclear import of HIV-1 reverse transcription complex (RTC) integrase. Binds and mediates the nuclear import of HIV-1 Rev. The sequence is that of Importin-7 (IPO7) from Homo sapiens (Human).